Here is a 93-residue protein sequence, read N- to C-terminus: MGIFDWKHWIVILVVVVLVFGTKKLKNLGTDVGESIKGFRKAMNDDEKPAEPVVPPAAQPVPPVQPQQSAPLNQPHTIDVQAQKVEEPTRKDS.

Residues 1-21 (MGIFDWKHWIVILVVVVLVFG) form a helical membrane-spanning segment. The interval 43–93 (MNDDEKPAEPVVPPAAQPVPPVQPQQSAPLNQPHTIDVQAQKVEEPTRKDS) is disordered. The segment covering 52 to 65 (PVVPPAAQPVPPVQ) has biased composition (pro residues). Residues 84–93 (KVEEPTRKDS) show a composition bias toward basic and acidic residues.

Belongs to the TatA/E family. The Tat system comprises two distinct complexes: a TatABC complex, containing multiple copies of TatA, TatB and TatC subunits, and a separate TatA complex, containing only TatA subunits. Substrates initially bind to the TatABC complex, which probably triggers association of the separate TatA complex to form the active translocon.

Its subcellular location is the cell inner membrane. Part of the twin-arginine translocation (Tat) system that transports large folded proteins containing a characteristic twin-arginine motif in their signal peptide across membranes. TatA could form the protein-conducting channel of the Tat system. The chain is Sec-independent protein translocase protein TatA from Pseudomonas fluorescens (strain ATCC BAA-477 / NRRL B-23932 / Pf-5).